We begin with the raw amino-acid sequence, 95 residues long: Aspartyl/glutamyl-tRNA(Asn/Gln) amidotransferase subunit C (95 aa).

Belongs to the GatC family. In terms of assembly, heterotrimer of A, B and C subunits.

It catalyses the reaction L-glutamyl-tRNA(Gln) + L-glutamine + ATP + H2O = L-glutaminyl-tRNA(Gln) + L-glutamate + ADP + phosphate + H(+). It carries out the reaction L-aspartyl-tRNA(Asn) + L-glutamine + ATP + H2O = L-asparaginyl-tRNA(Asn) + L-glutamate + ADP + phosphate + 2 H(+). In terms of biological role, allows the formation of correctly charged Asn-tRNA(Asn) or Gln-tRNA(Gln) through the transamidation of misacylated Asp-tRNA(Asn) or Glu-tRNA(Gln) in organisms which lack either or both of asparaginyl-tRNA or glutaminyl-tRNA synthetases. The reaction takes place in the presence of glutamine and ATP through an activated phospho-Asp-tRNA(Asn) or phospho-Glu-tRNA(Gln). This chain is Aspartyl/glutamyl-tRNA(Asn/Gln) amidotransferase subunit C, found in Halothermothrix orenii (strain H 168 / OCM 544 / DSM 9562).